We begin with the raw amino-acid sequence, 878 residues long: Alanine--tRNA ligase (878 aa).

Zn(2+) is bound by residues H567, H571, C669, and H673.

Belongs to the class-II aminoacyl-tRNA synthetase family. Zn(2+) is required as a cofactor.

The protein localises to the cytoplasm. It carries out the reaction tRNA(Ala) + L-alanine + ATP = L-alanyl-tRNA(Ala) + AMP + diphosphate. Catalyzes the attachment of alanine to tRNA(Ala) in a two-step reaction: alanine is first activated by ATP to form Ala-AMP and then transferred to the acceptor end of tRNA(Ala). Also edits incorrectly charged Ser-tRNA(Ala) and Gly-tRNA(Ala) via its editing domain. The polypeptide is Alanine--tRNA ligase (Rickettsia akari (strain Hartford)).